Reading from the N-terminus, the 130-residue chain is Small ribosomal subunit protein uS11 (130 aa).

The protein belongs to the universal ribosomal protein uS11 family. In terms of assembly, part of the 30S ribosomal subunit. Interacts with proteins S7 and S18. Binds to IF-3.

Located on the platform of the 30S subunit, it bridges several disparate RNA helices of the 16S rRNA. Forms part of the Shine-Dalgarno cleft in the 70S ribosome. The protein is Small ribosomal subunit protein uS11 of Buchnera aphidicola subsp. Schizaphis graminum (strain Sg).